Here is a 572-residue protein sequence, read N- to C-terminus: Proline--tRNA ligase (572 aa).

Belongs to the class-II aminoacyl-tRNA synthetase family. ProS type 1 subfamily. Homodimer.

It is found in the cytoplasm. It catalyses the reaction tRNA(Pro) + L-proline + ATP = L-prolyl-tRNA(Pro) + AMP + diphosphate. In terms of biological role, catalyzes the attachment of proline to tRNA(Pro) in a two-step reaction: proline is first activated by ATP to form Pro-AMP and then transferred to the acceptor end of tRNA(Pro). As ProRS can inadvertently accommodate and process non-cognate amino acids such as alanine and cysteine, to avoid such errors it has two additional distinct editing activities against alanine. One activity is designated as 'pretransfer' editing and involves the tRNA(Pro)-independent hydrolysis of activated Ala-AMP. The other activity is designated 'posttransfer' editing and involves deacylation of mischarged Ala-tRNA(Pro). The misacylated Cys-tRNA(Pro) is not edited by ProRS. In Yersinia pestis (strain Pestoides F), this protein is Proline--tRNA ligase.